The sequence spans 147 residues: Probable flagellum biosynthesis repressor protein FlbT (147 aa).

The protein belongs to the FlbT family.

Functionally, has a post-transcriptional repressor function in flagellum biogenesis. Associates with the 5'-UTR of fljK mRNA and promotes its degradation. The polypeptide is Probable flagellum biosynthesis repressor protein FlbT (Mesorhizobium japonicum (strain LMG 29417 / CECT 9101 / MAFF 303099) (Mesorhizobium loti (strain MAFF 303099))).